Reading from the N-terminus, the 488-residue chain is Glycogen synthase (488 aa).

Arg20 contacts ADP-alpha-D-glucose.

It belongs to the glycosyltransferase 1 family. Bacterial/plant glycogen synthase subfamily.

The catalysed reaction is [(1-&gt;4)-alpha-D-glucosyl](n) + ADP-alpha-D-glucose = [(1-&gt;4)-alpha-D-glucosyl](n+1) + ADP + H(+). Its pathway is glycan biosynthesis; glycogen biosynthesis. Functionally, synthesizes alpha-1,4-glucan chains using ADP-glucose. The polypeptide is Glycogen synthase (Chlorobaculum tepidum (strain ATCC 49652 / DSM 12025 / NBRC 103806 / TLS) (Chlorobium tepidum)).